The following is a 391-amino-acid chain: 8-amino-7-oxononanoate synthase (391 aa).

Substrate is bound at residue Arg20. 106–107 serves as a coordination point for pyridoxal 5'-phosphate; sequence GY. Residue His131 coordinates substrate. Residues Ser178, His206, and Thr234 each contribute to the pyridoxal 5'-phosphate site. Lys237 bears the N6-(pyridoxal phosphate)lysine mark. Thr353 contacts substrate.

The protein belongs to the class-II pyridoxal-phosphate-dependent aminotransferase family. BioF subfamily. As to quaternary structure, homodimer. The cofactor is pyridoxal 5'-phosphate.

It carries out the reaction 6-carboxyhexanoyl-[ACP] + L-alanine + H(+) = (8S)-8-amino-7-oxononanoate + holo-[ACP] + CO2. Its pathway is cofactor biosynthesis; biotin biosynthesis. Functionally, catalyzes the decarboxylative condensation of pimeloyl-[acyl-carrier protein] and L-alanine to produce 8-amino-7-oxononanoate (AON), [acyl-carrier protein], and carbon dioxide. The polypeptide is 8-amino-7-oxononanoate synthase (Trichlorobacter lovleyi (strain ATCC BAA-1151 / DSM 17278 / SZ) (Geobacter lovleyi)).